A 339-amino-acid chain; its full sequence is Ornithine carbamoyltransferase, catabolic (339 aa).

Carbamoyl phosphate is bound by residues 57 to 60 (STRT), Gln84, Arg108, and 135 to 138 (HPTQ). Residues Asn167, Asp231, and 235-236 (SM) contribute to the L-ornithine site. Carbamoyl phosphate-binding positions include 274-275 (CL) and Arg319.

Belongs to the aspartate/ornithine carbamoyltransferase superfamily. OTCase family.

The protein localises to the cytoplasm. The enzyme catalyses carbamoyl phosphate + L-ornithine = L-citrulline + phosphate + H(+). Its pathway is amino-acid degradation; L-arginine degradation via ADI pathway; carbamoyl phosphate from L-arginine: step 2/2. Its function is as follows. Reversibly catalyzes the transfer of the carbamoyl group from carbamoyl phosphate (CP) to the N(epsilon) atom of ornithine (ORN) to produce L-citrulline. In Enterococcus faecalis (strain ATCC 700802 / V583), this protein is Ornithine carbamoyltransferase, catabolic (arcB).